A 341-amino-acid polypeptide reads, in one-letter code: Platelet-activating factor receptor (341 aa).

Topologically, residues 1–16 (MEQNGSFRVDSEFRYT) are extracellular. Residue Asn4 is glycosylated (N-linked (GlcNAc...) asparagine). The helical transmembrane segment at 17 to 38 (LFPIVYSVIFVLGVVANGYVLW) threads the bilayer. At 39–54 (VFATLYPSKKLNEIKI) the chain is on the cytoplasmic side. A helical transmembrane segment spans residues 55 to 74 (FMVNLTVADLLFLMTLPLWI). At 75-91 (VYYSNEGDWIVHKFLCN) the chain is on the extracellular side. Cys90 and Cys173 are oxidised to a cystine. Residues 92–113 (LAGCLFFINTYCSVAFLGVITY) traverse the membrane as a helical segment. Residues 114 to 133 (NRYQAVAYPIKTAQATTRKR) are Cytoplasmic-facing. Residues 134–155 (GITLSLVIWISIAATASYFLAT) traverse the membrane as a helical segment. Residues 156 to 184 (DSTNVVPKKDGSGNITRCFEHYEPYSVPI) lie on the Extracellular side of the membrane. Asn169 is a glycosylation site (N-linked (GlcNAc...) asparagine). Residues 185–205 (LVVHIFITSCFFLVFFLIFYC) form a helical membrane-spanning segment. Over 206–233 (NMVIIHTLLTRPVRQQRKPEVKRRALWM) the chain is Cytoplasmic. A helical membrane pass occupies residues 234–254 (VCTVLAVFVICFVPHHVVQLP). Residues 255–275 (WTLAELGYQTNFHQAINDAHQ) are Extracellular-facing. A helical transmembrane segment spans residues 276–295 (ITLCLLSTNCVLDPVIYCFL). Topologically, residues 296–341 (TKKFRKHLSEKFYSMRSSRKCSRATSDTCTEVMMPANQTPVLPLKN) are cytoplasmic.

The protein belongs to the G-protein coupled receptor 1 family. As to quaternary structure, interacts with ARRB1. Present in almost all organs including spleen, small intestine, kidney, lung, liver and brain.

It is found in the cell membrane. Its function is as follows. Receptor for platelet activating factor, a chemotactic phospholipid mediator that possesses potent inflammatory, smooth-muscle contractile and hypotensive activity. Seems to mediate its action via a G protein that activates a phosphatidylinositol-calcium second messenger system. The polypeptide is Platelet-activating factor receptor (Ptafr) (Rattus norvegicus (Rat)).